The following is a 373-amino-acid chain: D-alanine--D-alanine ligase (373 aa).

The 208-residue stretch at 156–363 (KKLWSAAGLP…YPTLLATMVE (208 aa)) folds into the ATP-grasp domain. An ATP-binding site is contributed by 184 to 239 (LQRLGLPAYVKPARGGSSIGVSRVSSFDELPAAIAAARRHDPKVIVEAAINGRELE). Mg(2+) contacts are provided by Asp318, Glu330, and Asn332.

It belongs to the D-alanine--D-alanine ligase family. Mg(2+) is required as a cofactor. The cofactor is Mn(2+).

It is found in the cytoplasm. The enzyme catalyses 2 D-alanine + ATP = D-alanyl-D-alanine + ADP + phosphate + H(+). It participates in cell wall biogenesis; peptidoglycan biosynthesis. Its function is as follows. Cell wall formation. In Mycobacterium ulcerans (strain Agy99), this protein is D-alanine--D-alanine ligase.